We begin with the raw amino-acid sequence, 405 residues long: uncharacterized protein (405 aa).

This is an uncharacterized protein from Saimiri sciureus (Common squirrel monkey).